We begin with the raw amino-acid sequence, 606 residues long: Peptide-N(4)-(N-acetyl-beta-glucosaminyl)asparagine amidase (606 aa).

In terms of domain architecture, Thioredoxin spans 2–108 (PVTEVGSLPE…IAEKIRQHYS (107 aa)). 4 residues coordinate Zn(2+): Cys-191, Cys-194, Cys-225, and Cys-228. Cys-251 acts as the Nucleophile in catalysis. Active-site residues include His-278 and Asp-295. Residues 404-606 (DLGGRITGSE…SFSVKIWMKN (203 aa)) enclose the PAW domain.

This sequence belongs to the transglutaminase-like superfamily. PNGase family. The cofactor is Zn(2+).

It is found in the cytoplasm. It localises to the endoplasmic reticulum. It carries out the reaction Hydrolysis of an N(4)-(acetyl-beta-D-glucosaminyl)asparagine residue in which the glucosamine residue may be further glycosylated, to yield a (substituted) N-acetyl-beta-D-glucosaminylamine and a peptide containing an aspartate residue.. Inhibited by Zn(2+) and z-VAD-fmk (caspase inhibitor) but unaffected by EDTA. Specifically deglycosylates the denatured form of N-linked glycoproteins in the cytoplasm and assists their proteasome-mediated degradation. Cleaves the beta-aspartyl-glucosamine (GlcNAc) of the glycan and the amide side chain of Asn, converting Asn to Asp. Prefers proteins containing high-mannose over those bearing complex type oligosaccharides. Can recognize misfolded proteins in the endoplasmic reticulum that are exported to the cytosol to be destroyed and deglycosylate them, while it has no activity toward native proteins. Deglycosylation is a prerequisite for subsequent proteasome-mediated degradation of some, but not all, misfolded glycoproteins. Also displays oxidoreductase (thioredoxin) activity. Involved in regulating the expression of proteasomal subunits such as rpt-3 in order to confer resistance to proteasomal dysfunction. This Caenorhabditis elegans protein is Peptide-N(4)-(N-acetyl-beta-glucosaminyl)asparagine amidase (png-1).